The primary structure comprises 316 residues: Cell surface superoxide dismutase [Cu-Zn] 6 (316 aa).

The first 18 residues, 1-18 (MIFIPIIILIYLVSIAAS), serve as a signal peptide directing secretion. Positions 78, 80, and 96 each coordinate Cu cation. Histidine 96 and aspartate 119 together coordinate Zn(2+). A glycan (N-linked (GlcNAc...) asparagine) is linked at asparagine 128. Histidine 159 contacts Cu cation. 2 N-linked (GlcNAc...) asparagine glycosylation sites follow: asparagine 162 and asparagine 240. The interval 243–263 (DNVYSPEETRPSDQNKKSHRH) is disordered. The span at 249–258 (EETRPSDQNK) shows a compositional bias: basic and acidic residues. N-linked (GlcNAc...) asparagine glycans are attached at residues asparagine 278 and asparagine 281. Serine 288 carries GPI-anchor amidated serine lipidation. The propeptide at 289–316 (SDCLNDGMMVTGSVFGSLVLGIAAGIFV) is removed in mature form.

This sequence belongs to the Cu-Zn superoxide dismutase family. The cofactor is Cu cation. Requires Zn(2+) as cofactor. Post-translationally, the GPI-anchor is attached to the protein in the endoplasmic reticulum and serves to target the protein to the cell surface. There, the glucosamine-inositol phospholipid moiety is cleaved off and the GPI-modified mannoprotein is covalently attached via its lipidless GPI glycan remnant to the 1,6-beta-glucan of the outer cell wall layer.

Its subcellular location is the secreted. The protein resides in the cell wall. It localises to the membrane. It catalyses the reaction 2 superoxide + 2 H(+) = H2O2 + O2. Its function is as follows. Superoxide dismutases serve to convert damaging superoxide radicals, a key form of ROS, to less damaging hydrogen peroxide that can be converted into water by catalase action. May be involved protection against extracellular stress. The protein is Cell surface superoxide dismutase [Cu-Zn] 6 (SOD6) of Candida albicans (strain SC5314 / ATCC MYA-2876) (Yeast).